The chain runs to 450 residues: WD repeat-containing protein ATCSA-1 (450 aa).

WD repeat units lie at residues 41–81 (PHRG…DYEA), 101–141 (GHKY…AVVD), 148–185 (VYRTAMSSMAMSHTLIAAGTEDVQVRLCDIASGAFSHT), and 188–228 (GHRD…CFRV). The interval 269-298 (LQSKQTGSQSVKGSSSAKASVEKSRQKRIH) is disordered. Over residues 271-287 (SKQTGSQSVKGSSSAKA) the composition is skewed to low complexity. WD repeat units follow at residues 310–349 (AHYGAVTGLKATNDGMYLLSAGSDSRIRLWDIESGRNTLV) and 397–436 (GHYESVNTCCFNSNDQELYTSGSDRQILVWSPGGTVEDEM).

As to quaternary structure, interacts with DDB1A. As to expression, expressed in roots, leaves, stems, flowers and siliques.

The protein resides in the nucleus. Its function is as follows. Involved in UV-B tolerance and genome integrity. In association with DDB2, is necessary for repair of UV-B-induced DNA lesions. This Arabidopsis thaliana (Mouse-ear cress) protein is WD repeat-containing protein ATCSA-1.